The following is a 435-amino-acid chain: GPI-anchor transamidase component PIGU (435 aa).

The Cytoplasmic segment spans residues 2 to 3 (AA). Residues 4–22 (PLVLVLVVAVTVRAALFRS) form a helical membrane-spanning segment. Residues 23 to 78 (SLAEFISERVEVVSPLSSWKRVVEGLSLLDLGVSPYSGAVFHETPLIIYLFHFLID) lie on the Lumenal side of the membrane. The chain crosses the membrane as a helical span at residues 79-99 (YAELVFMITDALTAIALYFAI). Residues 100–136 (QDFNKVVFKKQKLLLELDQYAPDVAELIRTPMEMRYI) are Cytoplasmic-facing. The next 4 helical transmembrane spans lie at 137-158 (PLKV…VAKS), 159-178 (TCAI…IKGS), 179-194 (AFLS…YQSL), and 195-205 (YPLTLFVPGLL). Topologically, residues 206-222 (YLLQRQYIPVKMKSKAF) are cytoplasmic. 2 residues coordinate a cardiolipin: Lys-216 and Met-217. The chain crosses the membrane as a helical span at residues 223–244 (WIFSWEYAMMYVGSLVVIICLS). The Lumenal portion of the chain corresponds to 245-286 (FFLLSSWDFIPAVYGFILSVPDLTPNIGLFWYFFAEMFEHFS). Residues 287–306 (LFFVCVFQINVFFYTIPLAI) form a helical membrane-spanning segment. Over 307-311 (KLKEH) the chain is Cytoplasmic. Position 309 (Lys-309) interacts with a cardiolipin. 2 helical membrane-spanning segments follow: residues 312–331 (PIFF…SYPT) and 332–345 (VGDV…FPVW). At 346-354 (NHLYRFLRN) the chain is on the cytoplasmic side. A helical membrane pass occupies residues 355–372 (IFVLTCIIIVCSLLFPVL). The Lumenal portion of the chain corresponds to 373 to 384 (WHLWIYAGSANS). Residues Asn-383 and Asn-385 each contribute to the a 2-acyl-6-[6-phosphoethanolamine-alpha-D-mannosyl-(1-&gt;2)-6-phosphoethanolamine-alpha-D-mannosyl-(1-&gt;6)-2-phosphoethanolamine-alpha-D-mannosyl-(1-&gt;4)-alpha-D-glucosaminyl]-1-(1-radyl,2-acyl-sn-glycero-3-phospho)-1D-myo-inositol site. A helical membrane pass occupies residues 385–406 (NFFYAITLTFNVGQILLISDYF). At 407–435 (YAFLRREYYLTHGLYLTAKDGTEAMLVLK) the chain is on the cytoplasmic side.

It belongs to the PIGU family. As to quaternary structure, heteropentamer. Part of the GPI-anchor transamidase complex, consisting of PIGK, PIGT, PIGS, PIGU and GAA1.

The protein localises to the endoplasmic reticulum membrane. The protein operates within glycolipid biosynthesis; glycosylphosphatidylinositol-anchor biosynthesis. In terms of biological role, component of the glycosylphosphatidylinositol-anchor (GPI-anchor) transamidase (GPI-T) complex that catalyzes the formation of the linkage between a proprotein and a GPI-anchor and participates in GPI anchored protein biosynthesis. Binds the lipid portion of GPI-anchor. May act as an organizer in the transmembrane layer to recruit other subunits, and thus is essential for assembly of the complex. This Homo sapiens (Human) protein is GPI-anchor transamidase component PIGU.